A 487-amino-acid chain; its full sequence is Rhoptry apical surface protein 1 (487 aa).

The tract at residues 337-487 (EVAMSGRGGH…EEEQPLLFTQ (151 aa)) is disordered. Basic and acidic residues-rich tracts occupy residues 385–399 (DGIR…DRRA) and 454–475 (EKNE…GVEY).

As to quaternary structure, interacts with RASP2.

The protein resides in the cytoplasmic vesicle. It localises to the secretory vesicle. Its subcellular location is the rhoptry membrane. The polypeptide is Rhoptry apical surface protein 1 (Toxoplasma gondii (strain ATCC 50853 / GT1)).